The following is a 940-amino-acid chain: Isoleucine--tRNA ligase (940 aa).

The 'HIGH' region signature appears at Pro58–His68. Residue Glu564 coordinates L-isoleucyl-5'-AMP. A 'KMSKS' region motif is present at residues Lys605–Ser609. An ATP-binding site is contributed by Lys608. Residues Cys903, Cys906, Cys923, and Cys926 each coordinate Zn(2+).

This sequence belongs to the class-I aminoacyl-tRNA synthetase family. IleS type 1 subfamily. As to quaternary structure, monomer. Zn(2+) is required as a cofactor.

The protein resides in the cytoplasm. The catalysed reaction is tRNA(Ile) + L-isoleucine + ATP = L-isoleucyl-tRNA(Ile) + AMP + diphosphate. Its function is as follows. Catalyzes the attachment of isoleucine to tRNA(Ile). As IleRS can inadvertently accommodate and process structurally similar amino acids such as valine, to avoid such errors it has two additional distinct tRNA(Ile)-dependent editing activities. One activity is designated as 'pretransfer' editing and involves the hydrolysis of activated Val-AMP. The other activity is designated 'posttransfer' editing and involves deacylation of mischarged Val-tRNA(Ile). This chain is Isoleucine--tRNA ligase, found in Shewanella baltica (strain OS223).